A 513-amino-acid chain; its full sequence is Probable G-protein coupled receptor 176 (513 aa).

Positions 1–25 (MGHNGSWVSPNTSHPRNTSGAQAGA) are disordered. At 1–41 (MGHNGSWVSPNTSHPRNTSGAQAGANSSAFGELSEAQLYRQ) the chain is on the extracellular side. Asn4, Asn11, Asn17, and Asn26 each carry an N-linked (GlcNAc...) asparagine glycan. A helical membrane pass occupies residues 42–64 (FTTTVQVVIFIGSLLGNFTVLWS). Residues 65–77 (TCRTTVFKSVTNR) are Cytoplasmic-facing. A helical transmembrane segment spans residues 78–98 (FIKNLACSGICASVVCVPFDI). The Extracellular portion of the chain corresponds to 99 to 108 (ILSTSPHCCW). Residues 109–129 (WIYTMLFCKVLKFLHKVFCSV) form a helical membrane-spanning segment. Residues 130 to 157 (TVLSFPAIALDRYYSVLYPLERKISDAK) lie on the Cytoplasmic side of the membrane. The chain crosses the membrane as a helical span at residues 158–177 (SRELVMYIWAHAVVASVPVF). Residues 178–204 (AVTNVADIYATSTCTEVWSNSLGHLVY) are Extracellular-facing. The helical transmembrane segment at 205 to 225 (VLIYNVTTVIVPVAVVFLFLI) threads the bilayer. The Cytoplasmic segment spans residues 226–264 (LIRRALSASQKKKVIIAALRTPQNTISIPYASQREAELH). Residues 265–285 (ATLLSMVTVFILCSVPYATLV) form a helical membrane-spanning segment. Residues 286–301 (VYQTVLNVPNTSVFLL) lie on the Extracellular side of the membrane. A helical transmembrane segment spans residues 302–322 (LTAIWLPKVSLLANPVLFLTV). Residues 323-513 (NRSVRKCLVG…KVSIFPKVDS (191 aa)) lie on the Cytoplasmic side of the membrane. Residues 404–432 (VLTSSPEGEESQLAPSVPPPGTVDSVSRV) form a disordered region.

The protein belongs to the G-protein coupled receptor 1 family. In terms of tissue distribution, expressed in brain, lung, heart, stomach, intestine, cultured aortic smooth muscle cells and cardiac myocytes.

The protein resides in the cell membrane. Its function is as follows. Orphan receptor involved in normal circadian rhythm behavior. Acts through the G-protein subclass G(z)-alpha and has an agonist-independent basal activity to repress cAMP production. The sequence is that of Probable G-protein coupled receptor 176 (Gpr176) from Rattus norvegicus (Rat).